A 263-amino-acid chain; its full sequence is Probable ABC transporter permease protein ycf63 (263 aa).

6 helical membrane passes run 43 to 63 (LVGP…SMVF), 82 to 102 (AVIV…VIIA), 136 to 156 (LVFP…TISL), 159 to 179 (SIAI…SIFL), 199 to 219 (LCFG…SSGG), and 230 to 250 (SVVT…YFMF).

The protein belongs to the MlaE permease family.

The protein localises to the plastid. The protein resides in the chloroplast membrane. In terms of biological role, could be part of an ABC transporter complex. The polypeptide is Probable ABC transporter permease protein ycf63 (ycf63) (Porphyra purpurea (Red seaweed)).